A 197-amino-acid chain; its full sequence is Protein GrpE (197 aa).

Basic and acidic residues predominate over residues 1 to 27; that stretch reads MSNKEQHIEKEEQLQEEKHEEQQKTEE. A disordered region spans residues 1 to 34; the sequence is MSNKEQHIEKEEQLQEEKHEEQQKTEETEVEAVN.

Belongs to the GrpE family. As to quaternary structure, homodimer.

It is found in the cytoplasm. In terms of biological role, participates actively in the response to hyperosmotic and heat shock by preventing the aggregation of stress-denatured proteins, in association with DnaK and GrpE. It is the nucleotide exchange factor for DnaK and may function as a thermosensor. Unfolded proteins bind initially to DnaJ; upon interaction with the DnaJ-bound protein, DnaK hydrolyzes its bound ATP, resulting in the formation of a stable complex. GrpE releases ADP from DnaK; ATP binding to DnaK triggers the release of the substrate protein, thus completing the reaction cycle. Several rounds of ATP-dependent interactions between DnaJ, DnaK and GrpE are required for fully efficient folding. The polypeptide is Protein GrpE (Pasteurella multocida (strain Pm70)).